Reading from the N-terminus, the 415-residue chain is Casein kinase 1-like protein 3 (415 aa).

A Protein kinase domain is found at 9 to 277; sequence YKLGRKIGGG…FLKRLFRDLF (269 aa). Residues 15 to 23 and lysine 38 each bind ATP; that span reads IGGGSFGEI. The active-site Proton acceptor is the aspartate 128. 2 stretches are compositionally biased toward polar residues: residues 303 to 314 and 373 to 415; these read NQSQAVPGSSNP and NMPS…SPEK. Disordered regions lie at residues 303–330 and 344–415; these read NQSQ…GPNI and NAIG…SPEK.

The protein belongs to the protein kinase superfamily. CK1 Ser/Thr protein kinase family. Casein kinase I subfamily. Slightly autophosphorylated. In terms of tissue distribution, expressed in seedlings, stems, leaves and flowers.

The protein localises to the cytoplasm. The protein resides in the nucleus. It carries out the reaction L-seryl-[protein] + ATP = O-phospho-L-seryl-[protein] + ADP + H(+). The enzyme catalyses L-threonyl-[protein] + ATP = O-phospho-L-threonyl-[protein] + ADP + H(+). Its function is as follows. Protein kinase involved in blue light responses (e.g. hypocotyl elongation and flowering) by phosphorylating CRY2 to reduce its stability. The chain is Casein kinase 1-like protein 3 from Arabidopsis thaliana (Mouse-ear cress).